A 472-amino-acid polypeptide reads, in one-letter code: UDP-N-acetylmuramate--L-alanine ligase (472 aa).

118-124 is an ATP binding site; that stretch reads GTHGKTT.

This sequence belongs to the MurCDEF family.

It is found in the cytoplasm. The enzyme catalyses UDP-N-acetyl-alpha-D-muramate + L-alanine + ATP = UDP-N-acetyl-alpha-D-muramoyl-L-alanine + ADP + phosphate + H(+). The protein operates within cell wall biogenesis; peptidoglycan biosynthesis. Functionally, cell wall formation. The chain is UDP-N-acetylmuramate--L-alanine ligase from Methylococcus capsulatus (strain ATCC 33009 / NCIMB 11132 / Bath).